The following is a 403-amino-acid chain: S-adenosylmethionine synthase (403 aa).

Position 16 (H16) interacts with ATP. Residue D18 participates in Mg(2+) binding. E44 is a binding site for K(+). 2 residues coordinate L-methionine: E57 and Q100. The flexible loop stretch occupies residues 100-110; that stretch reads QSPDIAQGVDR. The disordered stretch occupies residues 106-126; the sequence is QGVDRSYESRSGSASTDAHDL. ATP contacts are provided by residues 176-178, 248-249, D257, 263-264, A280, and K284; these read DGK, KF, and RK. D257 contacts L-methionine. Position 288 (K288) interacts with L-methionine.

It belongs to the AdoMet synthase family. As to quaternary structure, homotetramer; dimer of dimers. Mg(2+) serves as cofactor. K(+) is required as a cofactor.

The protein localises to the cytoplasm. The enzyme catalyses L-methionine + ATP + H2O = S-adenosyl-L-methionine + phosphate + diphosphate. It participates in amino-acid biosynthesis; S-adenosyl-L-methionine biosynthesis; S-adenosyl-L-methionine from L-methionine: step 1/1. Catalyzes the formation of S-adenosylmethionine (AdoMet) from methionine and ATP. The overall synthetic reaction is composed of two sequential steps, AdoMet formation and the subsequent tripolyphosphate hydrolysis which occurs prior to release of AdoMet from the enzyme. This Clavibacter michiganensis subsp. michiganensis (strain NCPPB 382) protein is S-adenosylmethionine synthase.